A 376-amino-acid chain; its full sequence is Aminomethyltransferase (376 aa).

Belongs to the GcvT family. The glycine cleavage system is composed of four proteins: P, T, L and H.

It carries out the reaction N(6)-[(R)-S(8)-aminomethyldihydrolipoyl]-L-lysyl-[protein] + (6S)-5,6,7,8-tetrahydrofolate = N(6)-[(R)-dihydrolipoyl]-L-lysyl-[protein] + (6R)-5,10-methylene-5,6,7,8-tetrahydrofolate + NH4(+). Its function is as follows. The glycine cleavage system catalyzes the degradation of glycine. The chain is Aminomethyltransferase from Nostoc sp. (strain PCC 7120 / SAG 25.82 / UTEX 2576).